The primary structure comprises 90 residues: MKAVHMNASGQVQAVGFRYTTKLLADRLKVTGWVKNNPDGTVEIEAQAPDAVLDQFIDGVKASPSPSGRVNKLTVKSIPLFEGQDFIVKY.

An Acylphosphatase-like domain is found at 3-90 (AVHMNASGQV…FEGQDFIVKY (88 aa)). Residues Arg18 and Asn36 contribute to the active site.

Belongs to the acylphosphatase family.

The enzyme catalyses an acyl phosphate + H2O = a carboxylate + phosphate + H(+). In Pediococcus pentosaceus (strain ATCC 25745 / CCUG 21536 / LMG 10740 / 183-1w), this protein is Acylphosphatase (acyP).